The primary structure comprises 261 residues: Enolase-phosphatase E1 (261 aa).

Residues aspartate 16 and glutamate 18 each contribute to the Mg(2+) site. Substrate contacts are provided by residues serine 153–serine 154 and lysine 187. Position 212 (aspartate 212) interacts with Mg(2+).

This sequence belongs to the HAD-like hydrolase superfamily. MasA/MtnC family. In terms of assembly, monomer. It depends on Mg(2+) as a cofactor.

The protein localises to the cytoplasm. It is found in the nucleus. The catalysed reaction is 5-methylsulfanyl-2,3-dioxopentyl phosphate + H2O = 1,2-dihydroxy-5-(methylsulfanyl)pent-1-en-3-one + phosphate. It participates in amino-acid biosynthesis; L-methionine biosynthesis via salvage pathway; L-methionine from S-methyl-5-thio-alpha-D-ribose 1-phosphate: step 3/6. It functions in the pathway amino-acid biosynthesis; L-methionine biosynthesis via salvage pathway; L-methionine from S-methyl-5-thio-alpha-D-ribose 1-phosphate: step 4/6. Bifunctional enzyme that catalyzes the enolization of 2,3-diketo-5-methylthiopentyl-1-phosphate (DK-MTP-1-P) into the intermediate 2-hydroxy-3-keto-5-methylthiopentenyl-1-phosphate (HK-MTPenyl-1-P), which is then dephosphorylated to form the acireductone 1,2-dihydroxy-3-keto-5-methylthiopentene (DHK-MTPene). The polypeptide is Enolase-phosphatase E1 (Homo sapiens (Human)).